Here is a 1221-residue protein sequence, read N- to C-terminus: DNA-directed RNA polymerase subunit beta' (1221 aa).

4 residues coordinate Zn(2+): Cys-60, Cys-62, Cys-75, and Cys-78. Mg(2+)-binding residues include Asp-449, Asp-451, and Asp-453. Positions 820, 894, 901, and 904 each coordinate Zn(2+).

The protein belongs to the RNA polymerase beta' chain family. The RNAP catalytic core consists of 2 alpha, 1 beta, 1 beta' and 1 omega subunit. When a sigma factor is associated with the core the holoenzyme is formed, which can initiate transcription. Mg(2+) is required as a cofactor. Zn(2+) serves as cofactor.

The enzyme catalyses RNA(n) + a ribonucleoside 5'-triphosphate = RNA(n+1) + diphosphate. DNA-dependent RNA polymerase catalyzes the transcription of DNA into RNA using the four ribonucleoside triphosphates as substrates. The sequence is that of DNA-directed RNA polymerase subunit beta' from Ligilactobacillus salivarius (strain UCC118) (Lactobacillus salivarius).